The primary structure comprises 274 residues: MGTLSVNQNKLQKRLRRLAGEAVADFNMIEEGDKVMVCLSGGKDSYTMLDVLMHLQKVAPIKFDIVAVNMDQKQPGFPEHVLPAYLKELGIEYHIVEKDTYSVVKELIPEGKTTCSLCSRLRRGTLYTFADEIGATKMALGHHRDDIVETFFLNMFFNGSLKAMPPKLRADDGRNVVIRPLAYCHEKDIQAYSDLKQFPIIPCNLCGSQENLQRQVVKEMLQDWERKTPGRTESIFRALQNVQPSQLADRNLFDFTNLRIDETAASRFVNVVNI.

The PP-loop motif motif lies at 40 to 45 (SGGKDS). Residues Cys115, Cys118, and Cys206 each contribute to the [4Fe-4S] cluster site.

This sequence belongs to the TtcA family. In terms of assembly, homodimer. The cofactor is Mg(2+). [4Fe-4S] cluster is required as a cofactor.

The protein resides in the cytoplasm. The catalysed reaction is cytidine(32) in tRNA + S-sulfanyl-L-cysteinyl-[cysteine desulfurase] + AH2 + ATP = 2-thiocytidine(32) in tRNA + L-cysteinyl-[cysteine desulfurase] + A + AMP + diphosphate + H(+). The protein operates within tRNA modification. Its function is as follows. Catalyzes the ATP-dependent 2-thiolation of cytidine in position 32 of tRNA, to form 2-thiocytidine (s(2)C32). The sulfur atoms are provided by the cysteine/cysteine desulfurase (IscS) system. The polypeptide is tRNA-cytidine(32) 2-sulfurtransferase (Pseudomonas syringae pv. syringae (strain B728a)).